The chain runs to 166 residues: Lipoprotein signal peptidase (166 aa).

3 consecutive transmembrane segments (helical) span residues 12 to 32 (WLWV…LILQ), 70 to 90 (WFFS…MYRS), and 102 to 122 (ALII…GFVV). Catalysis depends on residues D123 and D141. A helical transmembrane segment spans residues 137-157 (FNLADSAICIGAALIVLEGFL).

Belongs to the peptidase A8 family.

The protein resides in the cell inner membrane. It carries out the reaction Release of signal peptides from bacterial membrane prolipoproteins. Hydrolyzes -Xaa-Yaa-Zaa-|-(S,diacylglyceryl)Cys-, in which Xaa is hydrophobic (preferably Leu), and Yaa (Ala or Ser) and Zaa (Gly or Ala) have small, neutral side chains.. Its pathway is protein modification; lipoprotein biosynthesis (signal peptide cleavage). In terms of biological role, this protein specifically catalyzes the removal of signal peptides from prolipoproteins. This Klebsiella pneumoniae (strain 342) protein is Lipoprotein signal peptidase.